The sequence spans 230 residues: Small ribosomal subunit protein uS3 (230 aa).

In terms of domain architecture, KH type-2 spans 39–107; sequence VREYLFKRLK…PVHINIEEVR (69 aa).

This sequence belongs to the universal ribosomal protein uS3 family. As to quaternary structure, part of the 30S ribosomal subunit. Forms a tight complex with proteins S10 and S14.

Binds the lower part of the 30S subunit head. Binds mRNA in the 70S ribosome, positioning it for translation. The protein is Small ribosomal subunit protein uS3 of Alcanivorax borkumensis (strain ATCC 700651 / DSM 11573 / NCIMB 13689 / SK2).